A 169-amino-acid chain; its full sequence is Large ribosomal subunit protein uL10 (169 aa).

Belongs to the universal ribosomal protein uL10 family. Part of the ribosomal stalk of the 50S ribosomal subunit. The N-terminus interacts with L11 and the large rRNA to form the base of the stalk. The C-terminus forms an elongated spine to which L12 dimers bind in a sequential fashion forming a multimeric L10(L12)X complex.

Its function is as follows. Forms part of the ribosomal stalk, playing a central role in the interaction of the ribosome with GTP-bound translation factors. This is Large ribosomal subunit protein uL10 from Rickettsia peacockii (strain Rustic).